The chain runs to 378 residues: Small RNA 2'-O-methyltransferase (378 aa).

Aspartate 61 contacts S-adenosyl-L-methionine. Glutamate 114, glutamate 117, histidine 118, and histidine 176 together coordinate Mg(2+).

It belongs to the methyltransferase superfamily. HEN1 family. Mg(2+) is required as a cofactor.

It is found in the cytoplasm. The enzyme catalyses small RNA 3'-end nucleotide + S-adenosyl-L-methionine = small RNA 3'-end 2'-O-methylnucleotide + S-adenosyl-L-homocysteine + H(+). Methyltransferase that adds a 2'-O-methyl group at the 3'-end of small RNAs. The protein is Small RNA 2'-O-methyltransferase of Schizosaccharomyces pombe (strain 972 / ATCC 24843) (Fission yeast).